Reading from the N-terminus, the 256-residue chain is Hydroxyacylglutathione hydrolase (256 aa).

Zn(2+) is bound by residues His55, His57, Asp59, His60, His113, Asp130, and His168.

Belongs to the metallo-beta-lactamase superfamily. Glyoxalase II family. In terms of assembly, monomer. Zn(2+) is required as a cofactor.

It catalyses the reaction an S-(2-hydroxyacyl)glutathione + H2O = a 2-hydroxy carboxylate + glutathione + H(+). The protein operates within secondary metabolite metabolism; methylglyoxal degradation; (R)-lactate from methylglyoxal: step 2/2. Its function is as follows. Thiolesterase that catalyzes the hydrolysis of S-D-lactoyl-glutathione to form glutathione and D-lactic acid. This is Hydroxyacylglutathione hydrolase from Alkalilimnicola ehrlichii (strain ATCC BAA-1101 / DSM 17681 / MLHE-1).